The chain runs to 344 residues: MLKVLSLRSALQRAASTRQLVYEGYRNPPEAIQLKTVTIADKPSADQVLVQWIAAPINPADLNQIQGVYPVKPALPAVGGNEGFGKVISVGSNVSSIKVGDHVIPDRSGLGTWRELGLHQENDLFPIDNTLSMEYAATFQVNPPTAYRMLKDFIDLKKGDTVAQNGANSAVGKHVIQICRILGIKTVNVVRSRDNLEELVKELKDLGADEVITQEELYSRKKKFPGVKLALNCVGGRSSLFLASLLDHGGCMVTYGGMSKQPVDCPTGPLIFKDISLRGFWMSRWYDIQKSPEKRHEMYQELAGWMKSGEIKKQEIVKNRLEDHAKALDTALSKFDKKQFFVLE.

Residues 1 to 14 constitute a mitochondrion transit peptide; sequence MLKVLSLRSALQRA. The Proton donor role is filled by tyrosine 69. NADP(+)-binding positions include asparagine 142, 168-171, 191-193, 255-258, 280-282, and lysine 338; these read NSAV, RSR, YGGM, and FWM.

The protein belongs to the zinc-containing alcohol dehydrogenase family. Quinone oxidoreductase subfamily. As to quaternary structure, homodimer.

It is found in the mitochondrion. The enzyme catalyses a 2,3-saturated acyl-[ACP] + NADP(+) = a (2E)-enoyl-[ACP] + NADPH + H(+). Its function is as follows. Catalyzes the NADPH-dependent reduction of trans-2-enoyl thioesters in mitochondrial fatty acid synthesis (fatty acid synthesis type II). Fatty acid chain elongation in mitochondria uses acyl carrier protein (ACP) as an acyl group carrier, but the enzyme accepts both ACP and CoA thioesters as substrates in vitro. May provide the octanoyl chain used for lipoic acid biosynthesis, regulating protein lipoylation and mitochondrial respiratory activity. Involved in iron homeostasis; affecting Fe-S cluster assembly and ceramide metabolism. Required for proper morphology and bioenergetic functions of mitochondria. Required for maintenance of neurons. The protein is Enoyl-[acyl-carrier-protein] reductase, mitochondrial of Caenorhabditis elegans.